The sequence spans 737 residues: Procollagen-lysine,2-oxoglutarate 5-dioxygenase 2 (737 aa).

The N-terminal stretch at Met-1–Gly-25 is a signal peptide. 3 N-linked (GlcNAc...) asparagine glycosylation sites follow: Asn-63, Asn-209, and Asn-297. Residue Thr-320 is modified to Phosphothreonine. Phosphotyrosine is present on Tyr-323. Asn-365 and Asn-522 each carry an N-linked (GlcNAc...) asparagine glycan. The Fe2OG dioxygenase domain occupies Lys-644–Pro-737. Fe cation is bound by residues His-666 and Asp-668. N-linked (GlcNAc...) asparagine glycosylation occurs at Asn-696. The residue at position 704 (Lys-704) is an N6-succinyllysine. His-718 is a binding site for Fe cation. An N-linked (GlcNAc...) asparagine glycan is attached at Asn-725. Arg-728 is an active-site residue.

As to quaternary structure, homodimer. Requires Fe(2+) as cofactor. L-ascorbate is required as a cofactor. Highly expressed in pancreas and muscle. Isoform 1 and isoform 2 are expressed in the majority of the examined cell types. Isoform 2 is specifically expressed in skin, lung, dura and aorta.

It localises to the rough endoplasmic reticulum membrane. It catalyses the reaction L-lysyl-[collagen] + 2-oxoglutarate + O2 = (5R)-5-hydroxy-L-lysyl-[collagen] + succinate + CO2. Its function is as follows. Forms hydroxylysine residues in -Xaa-Lys-Gly- sequences in collagens. These hydroxylysines serve as sites of attachment for carbohydrate units and are essential for the stability of the intermolecular collagen cross-links. The polypeptide is Procollagen-lysine,2-oxoglutarate 5-dioxygenase 2 (Homo sapiens (Human)).